Here is a 1528-residue protein sequence, read N- to C-terminus: Zinc finger FYVE domain-containing protein 16 (1528 aa).

Ser120 carries the phosphoserine modification. The tract at residues 629–664 (TQAVGGARPKQLLSLPPGTRSSKELNKPDVVDVPES) is disordered. Positions 649–658 (SSKELNKPDV) are enriched in basic and acidic residues. The segment at 735-793 (DSEAPNCMNCQVKFTFTKRRHHCRACGKVFCGVCCNRKCKLQYLEKEARVCVICYETIN) adopts an FYVE-type zinc-finger fold. 8 residues coordinate Zn(2+): Cys741, Cys744, Cys757, Cys760, Cys765, Cys768, Cys785, and Cys788. Phosphoserine occurs at positions 803, 833, 884, and 927. Positions 819-849 (TDQPLQETQTSSTPSPTTLPISALKQPNVEG) are disordered. Positions 821–838 (QPLQETQTSSTPSPTTLP) are enriched in low complexity. The disordered stretch occupies residues 928–949 (PTCHTAPVERLPGNTGTEGLPM).

As to quaternary structure, interacts (via C-terminus) with TOM1 (via C-terminus); interaction is required to target TOM1 to endosomes. Does not interact with TOM1L1 or TOM1L2.

It is found in the cytoplasm. Its subcellular location is the early endosome membrane. May be involved in regulating membrane trafficking in the endosomal pathway. Overexpression induces endosome aggregation. Required to target TOM1 to endosomes. This Mus musculus (Mouse) protein is Zinc finger FYVE domain-containing protein 16 (Zfyve16).